Consider the following 488-residue polypeptide: Ribulose bisphosphate carboxylase large chain (488 aa).

N127 and T177 together coordinate substrate. Residue K179 is the Proton acceptor of the active site. A substrate-binding site is contributed by K181. Mg(2+) contacts are provided by K205, D207, and E208. K205 bears the N6-carboxylysine mark. H297 acts as the Proton acceptor in catalysis. Substrate contacts are provided by R298, H330, and S382.

The protein belongs to the RuBisCO large chain family. Type I subfamily. In terms of assembly, heterohexadecamer of 8 large chains and 8 small chains. Mg(2+) is required as a cofactor.

Its subcellular location is the plastid. It is found in the chloroplast. It carries out the reaction 2 (2R)-3-phosphoglycerate + 2 H(+) = D-ribulose 1,5-bisphosphate + CO2 + H2O. The enzyme catalyses D-ribulose 1,5-bisphosphate + O2 = 2-phosphoglycolate + (2R)-3-phosphoglycerate + 2 H(+). Functionally, ruBisCO catalyzes two reactions: the carboxylation of D-ribulose 1,5-bisphosphate, the primary event in carbon dioxide fixation, as well as the oxidative fragmentation of the pentose substrate in the photorespiration process. Both reactions occur simultaneously and in competition at the same active site. In Pyropia yezoensis (Susabi-nori), this protein is Ribulose bisphosphate carboxylase large chain.